The primary structure comprises 343 residues: S-adenosylmethionine:tRNA ribosyltransferase-isomerase (343 aa).

It belongs to the QueA family. In terms of assembly, monomer.

The protein resides in the cytoplasm. It catalyses the reaction 7-aminomethyl-7-carbaguanosine(34) in tRNA + S-adenosyl-L-methionine = epoxyqueuosine(34) in tRNA + adenine + L-methionine + 2 H(+). The protein operates within tRNA modification; tRNA-queuosine biosynthesis. Functionally, transfers and isomerizes the ribose moiety from AdoMet to the 7-aminomethyl group of 7-deazaguanine (preQ1-tRNA) to give epoxyqueuosine (oQ-tRNA). This Geobacter metallireducens (strain ATCC 53774 / DSM 7210 / GS-15) protein is S-adenosylmethionine:tRNA ribosyltransferase-isomerase.